The primary structure comprises 620 residues: 1-deoxy-D-xylulose-5-phosphate synthase (620 aa).

Thiamine diphosphate is bound by residues H80 and 121–123 (GHS). Residue D152 coordinates Mg(2+). Thiamine diphosphate-binding positions include 153-154 (GA), N181, Y288, and E370. N181 is a Mg(2+) binding site.

The protein belongs to the transketolase family. DXPS subfamily. In terms of assembly, homodimer. Mg(2+) is required as a cofactor. It depends on thiamine diphosphate as a cofactor.

It catalyses the reaction D-glyceraldehyde 3-phosphate + pyruvate + H(+) = 1-deoxy-D-xylulose 5-phosphate + CO2. The protein operates within metabolic intermediate biosynthesis; 1-deoxy-D-xylulose 5-phosphate biosynthesis; 1-deoxy-D-xylulose 5-phosphate from D-glyceraldehyde 3-phosphate and pyruvate: step 1/1. Functionally, catalyzes the acyloin condensation reaction between C atoms 2 and 3 of pyruvate and glyceraldehyde 3-phosphate to yield 1-deoxy-D-xylulose-5-phosphate (DXP). The chain is 1-deoxy-D-xylulose-5-phosphate synthase from Escherichia coli O7:K1 (strain IAI39 / ExPEC).